A 145-amino-acid chain; its full sequence is Small ribosomal subunit protein uS12 (145 aa).

The protein belongs to the universal ribosomal protein uS12 family. Part of the 30S ribosomal subunit.

Its function is as follows. With S4 and S5 plays an important role in translational accuracy. Located at the interface of the 30S and 50S subunits. This Cenarchaeum symbiosum (strain A) protein is Small ribosomal subunit protein uS12.